A 487-amino-acid chain; its full sequence is UDP-N-acetylmuramate--L-alanine ligase (487 aa).

An ATP-binding site is contributed by 129–135 (GTHGKTT).

It belongs to the MurCDEF family.

The protein resides in the cytoplasm. It carries out the reaction UDP-N-acetyl-alpha-D-muramate + L-alanine + ATP = UDP-N-acetyl-alpha-D-muramoyl-L-alanine + ADP + phosphate + H(+). It functions in the pathway cell wall biogenesis; peptidoglycan biosynthesis. Functionally, cell wall formation. In Aliivibrio salmonicida (strain LFI1238) (Vibrio salmonicida (strain LFI1238)), this protein is UDP-N-acetylmuramate--L-alanine ligase.